The following is a 529-amino-acid chain: Biotin-dependent 3-methylcrotonyl-coenzyme A carboxylase beta1 subunit (529 aa).

Positions 16–272 (HRRLVAELNN…CEPAQWDVRR (257 aa)) constitute a CoA carboxyltransferase N-terminal domain. Residues 275 to 521 (EPKYPQAELY…SLCAHAPLDQ (247 aa)) form the CoA carboxyltransferase C-terminal domain.

It belongs to the AccD/PCCB family. The biotin-dependent acyl-CoA carboxylase complex is composed of AccA1, which contains the biotin carboxylase (BC) and biotin carboxyl carrier protein (BCCP) domains, and AccD1, which contains the carboxyl transferase (CT) domain. The AccA1/AccD1 complex forms a dodecamer.

It catalyses the reaction 3-methylbut-2-enoyl-CoA + N(6)-carboxybiotinyl-L-lysyl-[protein] = 3-methyl-(2E)-glutaconyl-CoA + N(6)-biotinyl-L-lysyl-[protein]. The protein operates within amino-acid degradation; L-leucine degradation. Its function is as follows. Component of a biotin-dependent acyl-CoA carboxylase complex. This subunit transfers the CO2 from carboxybiotin to the CoA ester substrate. When associated with the alpha1 subunit AccA1, is involved in branched amino-acid catabolism with methylcrotonyl coenzyme A as the substrate. Shows residual with propionyl-CoA and acetyl-CoA. The protein is Biotin-dependent 3-methylcrotonyl-coenzyme A carboxylase beta1 subunit of Mycobacterium tuberculosis (strain ATCC 25618 / H37Rv).